The following is a 424-amino-acid chain: Probable aminotransferase TAT4 (424 aa).

The protein belongs to the class-I pyridoxal-phosphate-dependent aminotransferase family. Pyridoxal 5'-phosphate serves as cofactor.

This is Probable aminotransferase TAT4 from Arabidopsis thaliana (Mouse-ear cress).